Reading from the N-terminus, the 608-residue chain is UvrABC system protein C (608 aa).

Residues 13-91 (HKPGVYIMHD…IKKNSPKYNI (79 aa)) enclose the GIY-YIG domain. Positions 202–237 (DELTKKLTDKMMAASKNLNFELAAKLRDSITNIQVI) constitute a UVR domain.

Belongs to the UvrC family. In terms of assembly, interacts with UvrB in an incision complex.

It is found in the cytoplasm. Its function is as follows. The UvrABC repair system catalyzes the recognition and processing of DNA lesions. UvrC both incises the 5' and 3' sides of the lesion. The N-terminal half is responsible for the 3' incision and the C-terminal half is responsible for the 5' incision. The polypeptide is UvrABC system protein C (Finegoldia magna (strain ATCC 29328 / DSM 20472 / WAL 2508) (Peptostreptococcus magnus)).